The sequence spans 217 residues: uncharacterized protein (217 aa).

Residues 98–203 (QRRQYVRTDA…GDQQALLQYC (106 aa)) enclose the PilZ domain.

This is an uncharacterized protein from Bacillus subtilis (strain 168).